A 510-amino-acid chain; its full sequence is Histidine ammonia-lyase (510 aa).

A cross-link (5-imidazolinone (Ala-Gly)) is located at residues 143 to 145 (ASG). Residue Ser-144 is modified to 2,3-didehydroalanine (Ser).

This sequence belongs to the PAL/histidase family. Contains an active site 4-methylidene-imidazol-5-one (MIO), which is formed autocatalytically by cyclization and dehydration of residues Ala-Ser-Gly.

The protein resides in the cytoplasm. The catalysed reaction is L-histidine = trans-urocanate + NH4(+). Its pathway is amino-acid degradation; L-histidine degradation into L-glutamate; N-formimidoyl-L-glutamate from L-histidine: step 1/3. The sequence is that of Histidine ammonia-lyase from Shewanella piezotolerans (strain WP3 / JCM 13877).